The sequence spans 349 residues: tRNA pseudouridine synthase D (349 aa).

Phe-26 contributes to the substrate binding site. Residue Asp-79 is the Nucleophile of the active site. Asn-128 contributes to the substrate binding site. The 149-residue stretch at 154–302 (GVPNYFGEQR…VEGCRRAILV (149 aa)) folds into the TRUD domain. Phe-328 contributes to the substrate binding site.

Belongs to the pseudouridine synthase TruD family.

It carries out the reaction uridine(13) in tRNA = pseudouridine(13) in tRNA. Functionally, responsible for synthesis of pseudouridine from uracil-13 in transfer RNAs. This Photorhabdus laumondii subsp. laumondii (strain DSM 15139 / CIP 105565 / TT01) (Photorhabdus luminescens subsp. laumondii) protein is tRNA pseudouridine synthase D.